The following is a 578-amino-acid chain: MNILELSEQEVVRRNSLEQLRNLGIDPYPAAEYTVNAYSTEIKRNFNGDENAAKRQVSIAGRIMSRRIMGKATFMELQDAEGRIQIYITRDDICPGEDKEFYNTVVKKCTDIGDFIGVKGYVFRTQMGEISVHVQEMTFLSKAIRPLPVVKEKDGEVFDGFTDSEQRYRQRYVDLVVNSHVKDIFLKRTMVFNSMRSFFNERGYIEVDTPVLQSIPGGAAARPFITHHNALDIPLYLRIANELYLKRLIVGGFDGVYEFSRNFRNEGMDRTHNPEFTAMEIYVAYKDYNWMMNFTEQMLERICMDVLGTTQVKVGEKLIDFKAPYRRVTMIEAIHEHTGIDISGMNEAELRQVCDKLGVEHNETMGKGKLIDEIFGEKCEKNYIQPTFITDYPKEMSPLTKEHRTNPELTERFELMVNGKELANAYSELNDPIDQRERFEEQLKLSEKGDDEAMYIDNDFIRALEYGMPPTSGMGIGMDRLVMLLTGQESIQEVLLFPQMKPEKVAPRDTKEKFAVCGIPEEWVPVLHKAGYLTVQSMREDKPGKVMQQLMDINKKYKLGLAGLNLETVSAWQEAPYE.

Mg(2+)-binding residues include E414 and E421.

The protein belongs to the class-II aminoacyl-tRNA synthetase family. As to quaternary structure, homodimer. Requires Mg(2+) as cofactor.

It is found in the cytoplasm. The catalysed reaction is tRNA(Lys) + L-lysine + ATP = L-lysyl-tRNA(Lys) + AMP + diphosphate. The chain is Lysine--tRNA ligase from Porphyromonas gingivalis (strain ATCC 33277 / DSM 20709 / CIP 103683 / JCM 12257 / NCTC 11834 / 2561).